The following is a 201-amino-acid chain: ATP-dependent Clp protease proteolytic subunit (201 aa).

The Nucleophile role is filled by Ser101. His126 is a catalytic residue.

This sequence belongs to the peptidase S14 family. Component of the chloroplastic Clp protease core complex.

It is found in the plastid. The protein resides in the chloroplast stroma. The catalysed reaction is Hydrolysis of proteins to small peptides in the presence of ATP and magnesium. alpha-casein is the usual test substrate. In the absence of ATP, only oligopeptides shorter than five residues are hydrolyzed (such as succinyl-Leu-Tyr-|-NHMec, and Leu-Tyr-Leu-|-Tyr-Trp, in which cleavage of the -Tyr-|-Leu- and -Tyr-|-Trp bonds also occurs).. Its function is as follows. Cleaves peptides in various proteins in a process that requires ATP hydrolysis. Has a chymotrypsin-like activity. Plays a major role in the degradation of misfolded proteins. This Staurastrum punctulatum (Green alga) protein is ATP-dependent Clp protease proteolytic subunit.